Consider the following 474-residue polypeptide: Isoflavone 7-O-glucosyltransferase 1 (474 aa).

Residues 1 to 49 (MKDTIVLYPNLGRGHLVSMVELGKLILTHHPSLSITILILTPPTTPSTT) constitute a propeptide, removed in mature form. Residue H15 is the Proton acceptor of the active site. An an anthocyanidin-binding site is contributed by H15. D125 (charge relay) is an active-site residue. The UDP-alpha-D-glucose site is built by T150, A351, Q353, H368, W371, N372, S373, and E376. Residue A391 coordinates an anthocyanidin. UDP-alpha-D-glucose is bound by residues E392 and Q393.

The protein belongs to the UDP-glycosyltransferase family. As to quaternary structure, monomer. In terms of tissue distribution, expressed in shoots, leaves, cotyledons, epicotyls, hypocotyls, roots, pods, seeds and flowers.

It carries out the reaction a 7-hydroxyisoflavone + UDP-alpha-D-glucose = a 7-hydroxyisoflavone 7-O-beta-D-glucoside + UDP + H(+). Involved in the biosynthesis of isoflavonoids. Specific for UDP-glucose. Can use genistein &gt; daidzein &gt; formononetin &gt; quercetin &gt; kaempferol &gt; 4,2',4',6'-tetrahydroxychalcone &gt; apigenin &gt; aureusidin &gt; esculetin &gt; naringenin as substrates, but not cyanidin, trans-p-coumaric acid, caffeic acid, benzoic acid, m- and p-hydroxybenzoic acids, salicylic acid, salicyl alcohol, and hydroquinone. This Glycine max (Soybean) protein is Isoflavone 7-O-glucosyltransferase 1 (GmIF7GT1).